A 91-amino-acid chain; its full sequence is Small ribosomal subunit protein bS16 (91 aa).

The protein belongs to the bacterial ribosomal protein bS16 family.

In Staphylococcus epidermidis (strain ATCC 35984 / DSM 28319 / BCRC 17069 / CCUG 31568 / BM 3577 / RP62A), this protein is Small ribosomal subunit protein bS16.